The primary structure comprises 937 residues: Isoleucine--tRNA ligase (937 aa).

The 'HIGH' region motif lies at Pro-58–Thr-68. Position 566 (Glu-566) interacts with L-isoleucyl-5'-AMP. The 'KMSKS' region signature appears at Lys-607 to Ser-611. Lys-610 lines the ATP pocket. The Zn(2+) site is built by Cys-906, Cys-909, Cys-925, and Cys-928.

Belongs to the class-I aminoacyl-tRNA synthetase family. IleS type 1 subfamily. In terms of assembly, monomer. It depends on Zn(2+) as a cofactor.

It localises to the cytoplasm. The enzyme catalyses tRNA(Ile) + L-isoleucine + ATP = L-isoleucyl-tRNA(Ile) + AMP + diphosphate. Functionally, catalyzes the attachment of isoleucine to tRNA(Ile). As IleRS can inadvertently accommodate and process structurally similar amino acids such as valine, to avoid such errors it has two additional distinct tRNA(Ile)-dependent editing activities. One activity is designated as 'pretransfer' editing and involves the hydrolysis of activated Val-AMP. The other activity is designated 'posttransfer' editing and involves deacylation of mischarged Val-tRNA(Ile). This is Isoleucine--tRNA ligase from Lawsonia intracellularis (strain PHE/MN1-00).